The primary structure comprises 389 residues: Curcumin synthase 1 (389 aa).

The active site involves Cys164.

This sequence belongs to the thiolase-like superfamily. Chalcone/stilbene synthases family. In terms of assembly, homodimer. Expressed in both the leaf and rhizome, with higher expression in the rhizome.

The catalysed reaction is (E)-feruloylacetyl-CoA + (E)-feruloyl-CoA + H2O = curcumin + CO2 + 2 CoA. Its pathway is secondary metabolite biosynthesis; flavonoid biosynthesis. Catalyzes the synthesis of curcumin by condensing feruloyl-CoA with a diketide-CoA in the curcuminoid biosynthesis. This Curcuma longa (Turmeric) protein is Curcumin synthase 1 (CURS1).